The primary structure comprises 545 residues: Chaperonin GroEL (545 aa).

Residues 29–32 (TLGP), Lys50, 86–90 (DGTTT), Gly415, and Asp495 each bind ATP.

The protein belongs to the chaperonin (HSP60) family. As to quaternary structure, forms a cylinder of 14 subunits composed of two heptameric rings stacked back-to-back. Interacts with the co-chaperonin GroES.

It localises to the cytoplasm. The catalysed reaction is ATP + H2O + a folded polypeptide = ADP + phosphate + an unfolded polypeptide.. In terms of biological role, together with its co-chaperonin GroES, plays an essential role in assisting protein folding. The GroEL-GroES system forms a nano-cage that allows encapsulation of the non-native substrate proteins and provides a physical environment optimized to promote and accelerate protein folding. This is Chaperonin GroEL from Porphyromonas gingivalis (strain ATCC 33277 / DSM 20709 / CIP 103683 / JCM 12257 / NCTC 11834 / 2561).